A 201-amino-acid polypeptide reads, in one-letter code: Adenylyl-sulfate kinase (201 aa).

An ATP-binding site is contributed by 35–42; sequence GLSGSGKS. The active-site Phosphoserine intermediate is S109.

It belongs to the APS kinase family.

It carries out the reaction adenosine 5'-phosphosulfate + ATP = 3'-phosphoadenylyl sulfate + ADP + H(+). It functions in the pathway sulfur metabolism; hydrogen sulfide biosynthesis; sulfite from sulfate: step 2/3. Its function is as follows. Catalyzes the synthesis of activated sulfate. The protein is Adenylyl-sulfate kinase of Prochlorococcus marinus (strain SARG / CCMP1375 / SS120).